The chain runs to 134 residues: Profilin-4 (134 aa).

Cys-13 and Cys-118 are joined by a disulfide. Positions 84–100 (AVIRGKKGSGGITIKKT) match the Involved in PIP2 interaction motif. Thr-114 is modified (phosphothreonine).

This sequence belongs to the profilin family. In terms of assembly, occurs in many kinds of cells as a complex with monomeric actin in a 1:1 ratio. Post-translationally, phosphorylated by MAP kinases.

It is found in the cytoplasm. Its subcellular location is the cytoskeleton. In terms of biological role, binds to actin and affects the structure of the cytoskeleton. At high concentrations, profilin prevents the polymerization of actin, whereas it enhances it at low concentrations. The polypeptide is Profilin-4 (Olea europaea (Common olive)).